Here is a 215-residue protein sequence, read N- to C-terminus: LysM and putative peptidoglycan-binding domain-containing protein 2 (215 aa).

The disordered stretch occupies residues 1–40; the sequence is MADLSPAPALREGGPRAHRPSAPSPPPRSRSTSEPEEAEL. A2 bears the N-acetylalanine mark. 4 positions are modified to phosphoserine: S5, S24, S33, and S57. The 45-residue stretch at 71-115 folds into the LysM domain; the sequence is VEHRVRAGDTLQGIALKYGVTMEQIKRANKLFTNDCIFLKKTLSI. 2 disordered regions span residues 135-176 and 195-215; these read ESET…EVSA and RKLK…LYHS. Over residues 145-156 the composition is skewed to acidic residues; that stretch reads QEEEPVVSEEEL. Positions 157–169 are enriched in pro residues; that stretch reads PPPSPQDPDPKPA. Positions 196 to 205 are enriched in basic and acidic residues; the sequence is KLKEESRDEE.

The sequence is that of LysM and putative peptidoglycan-binding domain-containing protein 2 (Lysmd2) from Mus musculus (Mouse).